A 153-amino-acid chain; its full sequence is Adenosine 5'-monophosphoramidase HINT3 (153 aa).

The 111-residue stretch at 20–130 (IFCRIANKQE…PASQLGFLSR (111 aa)) folds into the HIT domain. Residues 46–47 (DI) and 115–117 (HLH) contribute to the AMP site. Residues 113-117 (HLHLH) carry the Histidine triad motif motif. The Tele-AMP-histidine intermediate role is filled by His115.

It belongs to the HINT family. In terms of assembly, forms dimers to octamers and even larger oligomer.

The protein resides in the cytoplasm. It localises to the nucleus. The catalysed reaction is adenosine 5'-phosphoramidate + H2O = AMP + NH4(+). Exhibits adenosine 5'-monophosphoramidase activity, hydrolyzing purine nucleotide phosphoramidates with a single phosphate group such as adenosine 5'monophosphoramidate (AMP-NH2) to yield AMP and NH2. Hydrolyzes lysyl-AMP (AMP-N-epsilon-(N-alpha-acetyl lysine methyl ester)) generated by lysine tRNA ligase. This is Adenosine 5'-monophosphoramidase HINT3 (hint3) from Xenopus tropicalis (Western clawed frog).